Consider the following 297-residue polypeptide: Magnetosome protein MamB (297 aa).

The Cytoplasmic portion of the chain corresponds to 1–12; sequence MKFENCRDCREE. Residues 1–214 are transmembrane domain (TMD); sequence MKFENCRDCR…GLMDSSVDTE (214 aa). A helical membrane pass occupies residues 13-33; it reads VVWWAFTADICMTLFKGILGL. Residues 34 to 83 lie on the Lumenal side of the membrane; it reads MSGSVALVADSLHSGADVVASGVTQLSLKISNKPADERYPFGYGNIQYIS. A helical membrane pass occupies residues 84–104; that stretch reads SAIVGSLLLIGASFLMYGSVV. The Cytoplasmic segment spans residues 105 to 112; that stretch reads KLISGTYE. A helical membrane pass occupies residues 113–133; the sequence is APSIFAALGASVTVIVNELMY. The Lumenal segment spans residues 134 to 164; sequence RYQICVGNENNSPAIIANAWDNRSDAISSAA. The chain crosses the membrane as a helical span at residues 165 to 185; sequence VMVGVIASVIGFPIADTIAAI. At 186–297 the chain is on the cytoplasmic side; that stretch reads GVSALVGHIG…PAPAAVTVRV (112 aa). Residues 215-297 are C-terminal domain (CTD); sequence LLQTAWQIAT…PAPAAVTVRV (83 aa).

The protein belongs to the cation diffusion facilitator (CDF) transporter (TC 2.A.4) family. Forms homodimers via its C-terminal domain, may form higher order multimers that are sensitive to reducing agent. Probably interacts with MamE. Interacts with MamM via their C-terminal domains.

The protein resides in the cell inner membrane. Its subcellular location is the magnetosome membrane. Plays a dual, essential role in magnetosome formation; required for magnetosome vesicle formation as well as biomineralization. Requires heterodimerization with MamM for stability. Probably binds and transports iron. One of 7 genes (mamLQBIEMO) able to induce magnetosome membrane biogenesis; coexpression of mamLQRBIEMO in a deletion of the 17 gene mamAB operon restores magnetosome vesicle formation but not magnetite biosynthesis. The sequence is that of Magnetosome protein MamB from Magnetospirillum gryphiswaldense (strain DSM 6361 / JCM 21280 / NBRC 15271 / MSR-1).